The primary structure comprises 434 residues: Alpha-enolase (434 aa).

Position 40 (Ser-40) interacts with Mg(2+). Substrate contacts are provided by His-158 and Glu-167. The active-site Proton donor is the Glu-210. 3 residues coordinate Mg(2+): Asp-245, Glu-293, and Asp-318. Residues Glu-293 and Asp-318 each coordinate substrate. Lys-343 serves as the catalytic Proton acceptor. Residues 370–373 and Lys-394 each bind substrate; that span reads SHRS.

It belongs to the enolase family. In terms of assembly, homodimer. The cofactor is Mg(2+).

The protein localises to the cytoplasm. It carries out the reaction (2R)-2-phosphoglycerate = phosphoenolpyruvate + H2O. Its pathway is carbohydrate degradation; glycolysis; pyruvate from D-glyceraldehyde 3-phosphate: step 4/5. The protein is Alpha-enolase (eno1) of Xenopus laevis (African clawed frog).